The sequence spans 462 residues: MSNRMWGGRFASGPAEIMEEINASIGFDKRLAPQDIRGSLAHVAMLGKTGILPQADVAAIQAGLKTVQAEIESGAFTFARSLEDIHMNVESRLREIVGPAAGRLHTARSRNDQVATDMRLWVRDTLDELDAQAADLQRALAETALKHAGTVMPGFTHLQSAQPVTFGHHLLAYVEMLARDRGRFRDARARLNECPLGAAALAGTSFPIDRHATAAALGFDRPTANSLDSVADRDFALEALSAAAIAAVHLSRFAEEIVIWTSAQFGFVKLSDRFTTGSSIMPQKRNPDAAELVRAKAGRVIGALSGLLIVMKGLPLAYSKDMQEDKEGTFDALQTLSLCLAAMAGMVRDLEPVPEMLKAAAGSGYATATDLADWLVRELGLPFRDAHHVTGRLVGVAAARGVGLEALSLAEMQAEEPRITAAVYDVLGVENSVASRTSYGGTAPANVRAQAERWLKALSETK.

It belongs to the lyase 1 family. Argininosuccinate lyase subfamily.

The protein localises to the cytoplasm. It carries out the reaction 2-(N(omega)-L-arginino)succinate = fumarate + L-arginine. The protein operates within amino-acid biosynthesis; L-arginine biosynthesis; L-arginine from L-ornithine and carbamoyl phosphate: step 3/3. This Methylobacterium nodulans (strain LMG 21967 / CNCM I-2342 / ORS 2060) protein is Argininosuccinate lyase.